The primary structure comprises 115 residues: NADH-ubiquinone oxidoreductase chain 3 (115 aa).

A run of 3 helical transmembrane segments spans residues 3-23 (LIMV…VAFW), 55-75 (FFLV…LLPI), and 84-104 (INTM…GLAY).

Belongs to the complex I subunit 3 family. In terms of assembly, core subunit of respiratory chain NADH dehydrogenase (Complex I) which is composed of 45 different subunits. Interacts with TMEM186. Interacts with TMEM242.

The protein resides in the mitochondrion inner membrane. It catalyses the reaction a ubiquinone + NADH + 5 H(+)(in) = a ubiquinol + NAD(+) + 4 H(+)(out). Functionally, core subunit of the mitochondrial membrane respiratory chain NADH dehydrogenase (Complex I) which catalyzes electron transfer from NADH through the respiratory chain, using ubiquinone as an electron acceptor. Essential for the catalytic activity of complex I. In Scotinomys teguina (Alston's brown mouse), this protein is NADH-ubiquinone oxidoreductase chain 3.